The sequence spans 356 residues: Phosphoribosyl pyrophosphate synthase-associated protein 1 (356 aa).

Met-1 is modified (N-acetylmethionine). Ser-177 and Ser-215 each carry phosphoserine.

Belongs to the ribose-phosphate pyrophosphokinase family. Binds to PRPS1 and PRPS2.

In terms of biological role, seems to play a negative regulatory role in 5-phosphoribose 1-diphosphate synthesis. The chain is Phosphoribosyl pyrophosphate synthase-associated protein 1 (PRPSAP1) from Bos taurus (Bovine).